We begin with the raw amino-acid sequence, 301 residues long: Nucleosome assembly protein 1;3 (301 aa).

Positions 15-69 (VETLKNKLQALAEQHVDVLESLAPVVRKRVDVLIEIQSQHDELEAKFLEEKSALE) form a coiled coil. The Nuclear export signal signature appears at 36-51 (LAPVVRKRVDVLIEIQ). Residues 279–301 (EDYGASWVDDEEDDDDEYSDEEA) are disordered. At serine 297 the chain carries Phosphoserine; by CK2.

This sequence belongs to the nucleosome assembly protein (NAP) family.

It is found in the nucleus. Its subcellular location is the cytoplasm. May modulate chromatin structure by regulation of nucleosome assembly/disassembly. The protein is Nucleosome assembly protein 1;3 (NAP1;3) of Oryza sativa subsp. indica (Rice).